The sequence spans 423 residues: Serine--tRNA ligase (423 aa).

L-serine is bound at residue 230 to 232 (TSE). 261–263 (RSE) is an ATP binding site. Glutamate 284 is a binding site for L-serine. 348 to 351 (EISS) contacts ATP. Serine 384 is an L-serine binding site.

This sequence belongs to the class-II aminoacyl-tRNA synthetase family. Type-1 seryl-tRNA synthetase subfamily. As to quaternary structure, homodimer. The tRNA molecule binds across the dimer.

It localises to the cytoplasm. It carries out the reaction tRNA(Ser) + L-serine + ATP = L-seryl-tRNA(Ser) + AMP + diphosphate + H(+). The enzyme catalyses tRNA(Sec) + L-serine + ATP = L-seryl-tRNA(Sec) + AMP + diphosphate + H(+). The protein operates within aminoacyl-tRNA biosynthesis; selenocysteinyl-tRNA(Sec) biosynthesis; L-seryl-tRNA(Sec) from L-serine and tRNA(Sec): step 1/1. In terms of biological role, catalyzes the attachment of serine to tRNA(Ser). Is also able to aminoacylate tRNA(Sec) with serine, to form the misacylated tRNA L-seryl-tRNA(Sec), which will be further converted into selenocysteinyl-tRNA(Sec). The chain is Serine--tRNA ligase from Macrococcus caseolyticus (strain JCSC5402) (Macrococcoides caseolyticum).